The sequence spans 204 residues: Large ribosomal subunit protein eL15 (204 aa).

Belongs to the eukaryotic ribosomal protein eL15 family. As to quaternary structure, component of the large ribosomal subunit.

The protein resides in the cytoplasm. Component of the large ribosomal subunit. The ribosome is a large ribonucleoprotein complex responsible for the synthesis of proteins in the cell. The polypeptide is Large ribosomal subunit protein eL15 (rpl15) (Monopterus albus (Swamp eel)).